Consider the following 426-residue polypeptide: DNA polymerase processivity factor component OPG148 (426 aa).

Belongs to the orthopoxvirus OPG148 family. In terms of assembly, interacts with the DNA polymerase catalytic subunit OPG071. Interacts with UDG/OPG116. Component of the uracil-DNA glycosylase(UDG)-OPG148-polymerase complex; OPG148 and UDG form a heterodimeric processivity factor that associates with OPG071 to form the processive polymerase holoenzyme. Interacts with OPG117.

Functionally, plays an essential role in viral DNA replication by acting as the polymerase processivity factor together with protein OPG116. Serves as a bridge which links the DNA polymerase OPG071 and the uracil DNA glycosylase. In Variola virus (isolate Human/India/Ind3/1967) (VARV), this protein is DNA polymerase processivity factor component OPG148 (OPG148).